Reading from the N-terminus, the 352-residue chain is Putative histone-lysine N-methyltransferase ASHH4 (352 aa).

The region spanning D60 to H109 is the AWS domain. Residues K111–Q228 form the SET domain. In terms of domain architecture, Post-SET spans A234 to G250.

Belongs to the class V-like SAM-binding methyltransferase superfamily. Histone-lysine methyltransferase family. SET2 subfamily.

Its subcellular location is the nucleus. It localises to the chromosome. The protein localises to the centromere. The enzyme catalyses L-lysyl-[histone] + S-adenosyl-L-methionine = N(6)-methyl-L-lysyl-[histone] + S-adenosyl-L-homocysteine + H(+). In terms of biological role, histone methyltransferase. In Arabidopsis thaliana (Mouse-ear cress), this protein is Putative histone-lysine N-methyltransferase ASHH4 (ASHH4).